We begin with the raw amino-acid sequence, 675 residues long: PTS system glucose-specific EIICBA component (675 aa).

Residues K3–D414 enclose the PTS EIIC type-1 domain. The next 11 helical transmembrane spans lie at L16 to F36, M59 to V79, I81 to L101, V126 to A146, F170 to W190, L211 to I231, F273 to Y293, V303 to P323, F328 to L348, V355 to P375, and T378 to F398. The 82-residue stretch at S425 to K506 folds into the PTS EIIB type-1 domain. The Phosphocysteine intermediate; for EIIB activity role is filled by C447. Residues D547–N651 form the PTS EIIA type-1 domain. Residue H599 is the Tele-phosphohistidine intermediate; for EIIA activity of the active site.

It localises to the cell membrane. The enzyme catalyses N(pros)-phospho-L-histidyl-[protein] + D-glucose(out) = D-glucose 6-phosphate(in) + L-histidyl-[protein]. In terms of biological role, the phosphoenolpyruvate-dependent sugar phosphotransferase system (sugar PTS), a major carbohydrate active transport system, catalyzes the phosphorylation of incoming sugar substrates concomitantly with their translocation across the cell membrane. This system is involved in glucose transport. The polypeptide is PTS system glucose-specific EIICBA component (ptsG) (Staphylococcus epidermidis).